The chain runs to 429 residues: Histidinol dehydrogenase (429 aa).

Y130, Q191, and N214 together coordinate NAD(+). Residues S237, Q259, and H262 each coordinate substrate. 2 residues coordinate Zn(2+): Q259 and H262. Catalysis depends on proton acceptor residues E327 and H328. Substrate contacts are provided by H328, D361, E415, and H420. A Zn(2+)-binding site is contributed by D361. H420 is a Zn(2+) binding site.

It belongs to the histidinol dehydrogenase family. Zn(2+) serves as cofactor.

The enzyme catalyses L-histidinol + 2 NAD(+) + H2O = L-histidine + 2 NADH + 3 H(+). The protein operates within amino-acid biosynthesis; L-histidine biosynthesis; L-histidine from 5-phospho-alpha-D-ribose 1-diphosphate: step 9/9. Functionally, catalyzes the sequential NAD-dependent oxidations of L-histidinol to L-histidinaldehyde and then to L-histidine. In Neisseria meningitidis serogroup A / serotype 4A (strain DSM 15465 / Z2491), this protein is Histidinol dehydrogenase.